Reading from the N-terminus, the 115-residue chain is Large ribosomal subunit protein P2y (115 aa).

The tract at residues 63 to 115 (ASVPSGGGGGVAVASATSGGGGGGGASAAESKKEEKKEEKEESDDDMGFSLFE) is disordered. Residues 92–102 (ESKKEEKKEEK) show a composition bias toward basic and acidic residues. Ser-105 is modified (phosphoserine).

The protein belongs to the eukaryotic ribosomal protein P1/P2 family. P1 and P2 exist as dimers at the large ribosomal subunit. In terms of processing, phosphorylated.

Its function is as follows. Plays an important role in the elongation step of protein synthesis. The sequence is that of Large ribosomal subunit protein P2y (RPP2B) from Arabidopsis thaliana (Mouse-ear cress).